A 134-amino-acid polypeptide reads, in one-letter code: MDFVMKQALGGATKDMGKMLGGDEEKDPDAQKKEEERQEALRQQEDERKQKHIRMETEREKVRQQIRDKYGLKKKEEKEAEEKAAMEAPIEGSLTRPKKAIPAGCGDEDEEDEESILDTVLKYLPGPLQDMFKK.

The segment at 1–114 (MDFVMKQALG…CGDEDEEDEE (114 aa)) is disordered. Over residues 15–85 (DMGKMLGGDE…EEKEAEEKAA (71 aa)) the composition is skewed to basic and acidic residues. A coiled-coil region spans residues 29–84 (DAQKKEEERQEALRQQEDERKQKHIRMETEREKVRQQIRDKYGLKKKEEKEAEEKA).

This sequence belongs to the complexin/synaphin family. As to quaternary structure, binds to the SNARE core complex containing SNAP25, VAMP2 and STX1A. Nervous system. Present in electric organ (at protein level).

The protein localises to the cytoplasm. The protein resides in the cytosol. It is found in the presynapse. It localises to the nucleus. Its subcellular location is the perikaryon. Its function is as follows. Positively regulates a late step in synaptic vesicle exocytosis. This chain is Complexin-2, found in Narke japonica (Japanese sleeper ray).